We begin with the raw amino-acid sequence, 319 residues long: MDIDEQIIQDYSNSKLDVVQIDGLVVLKIIKQCKEYLPELVPGQLLGLDIGTSLEVSNCFPFPPRDQEDENSESIADYQLEMMRFLREVNIDSNTVGWYTPTYLNSFFNESVIETQYNYQATINQKCVVIVYDPIKTSQGTLSLKCYRLTQSFMELFKDQSFSRERLDQANLSFNDIFEQIPIKIHNSQLINALLYEFDGASNNLTNSFDRLNISNNIYLEKVVEGMTDCLESLNQELNKVYINQRNIQTQKTNYIQQKFLEGQKVDEDELASMIKPLNPPSKLTSLLLTNQINNYTDQIHSFSGNSLTKLSLLKDLQK.

The region spanning 19–153 is the MPN domain; sequence VQIDGLVVLK…LKCYRLTQSF (135 aa).

This sequence belongs to the eIF-3 subunit H family. As to quaternary structure, component of the eukaryotic translation initiation factor 3 (eIF-3) complex.

The protein resides in the cytoplasm. Functionally, component of the eukaryotic translation initiation factor 3 (eIF-3) complex, which is involved in protein synthesis of a specialized repertoire of mRNAs and, together with other initiation factors, stimulates binding of mRNA and methionyl-tRNAi to the 40S ribosome. The eIF-3 complex specifically targets and initiates translation of a subset of mRNAs involved in cell proliferation. The polypeptide is Eukaryotic translation initiation factor 3 subunit H (eif3H) (Dictyostelium discoideum (Social amoeba)).